The sequence spans 399 residues: Elongation factor Tu (399 aa).

The region spanning 10-209 (KPHVNIGTIG…EVDAYIPTPE (200 aa)) is the tr-type G domain. Residues 19-26 (GHVDHGKT) are G1. GTP is bound at residue 19-26 (GHVDHGKT). A Mg(2+)-binding site is contributed by threonine 26. A G2 region spans residues 60 to 64 (GITIA). Positions 81 to 84 (DCPG) are G3. GTP-binding positions include 81-85 (DCPGH) and 136-139 (NKQD). The G4 stretch occupies residues 136–139 (NKQD). Residues 174–176 (SAL) form a G5 region.

The protein belongs to the TRAFAC class translation factor GTPase superfamily. Classic translation factor GTPase family. EF-Tu/EF-1A subfamily. As to quaternary structure, monomer.

It localises to the cytoplasm. The enzyme catalyses GTP + H2O = GDP + phosphate + H(+). Its function is as follows. GTP hydrolase that promotes the GTP-dependent binding of aminoacyl-tRNA to the A-site of ribosomes during protein biosynthesis. This Helicobacter pylori (strain ATCC 700392 / 26695) (Campylobacter pylori) protein is Elongation factor Tu.